The following is a 388-amino-acid chain: Homoserine O-acetyltransferase (388 aa).

Residues 55–354 (PIVLIEHALT…PTGHDGFLIE (300 aa)) enclose the AB hydrolase-1 domain. S150 serves as the catalytic Nucleophile. R220 contacts substrate. Active-site residues include D318 and H348. D349 contributes to the substrate binding site.

It belongs to the AB hydrolase superfamily. MetX family. In terms of assembly, homodimer.

The protein resides in the cytoplasm. The enzyme catalyses L-homoserine + acetyl-CoA = O-acetyl-L-homoserine + CoA. The protein operates within amino-acid biosynthesis; L-methionine biosynthesis via de novo pathway; O-acetyl-L-homoserine from L-homoserine: step 1/1. Transfers an acetyl group from acetyl-CoA to L-homoserine, forming acetyl-L-homoserine. The chain is Homoserine O-acetyltransferase from Corynebacterium urealyticum (strain ATCC 43042 / DSM 7109).